A 76-amino-acid chain; its full sequence is Antimicrobial peptide lumbricin-1 (76 aa).

Residues methionine 1–threonine 14 constitute a propeptide, removed in mature form.

Its function is as follows. Displays antimicrobial activity against the Gram-positive bacteria B.subtilis ATCC 62037, S.aureus ATCC 15752 and S.mutans ATCC 25175, the Gram-negative bacteria E.coli ATCC 27325, P.putida ATCC 17426 and Serratia sp. ATCC 21074, and the fungi C.albicans ATCC 10231, C.neoformans ATCC 34881 and S.cerevisiae ATCC 44774. Does not possess hemolytic activity. This Lumbricus rubellus (Humus earthworm) protein is Antimicrobial peptide lumbricin-1.